Here is a 306-residue protein sequence, read N- to C-terminus: Recombination-associated protein RdgC (306 aa).

Belongs to the RdgC family.

The protein resides in the cytoplasm. It is found in the nucleoid. May be involved in recombination. In Pseudomonas paraeruginosa (strain DSM 24068 / PA7) (Pseudomonas aeruginosa (strain PA7)), this protein is Recombination-associated protein RdgC.